A 151-amino-acid chain; its full sequence is Small ribosomal subunit protein uS19 (151 aa).

The segment at 1–23 is disordered; that stretch reads MVVNKQGSVKSIKRKARKSRKVT. A compositionally biased stretch (basic residues) spans 11–23; sequence SIKRKARKSRKVT.

This sequence belongs to the universal ribosomal protein uS19 family.

Protein S19 forms a complex with S13 that binds strongly to the 16S ribosomal RNA. This chain is Small ribosomal subunit protein uS19 (rps19), found in Thermoplasma volcanium (strain ATCC 51530 / DSM 4299 / JCM 9571 / NBRC 15438 / GSS1).